A 426-amino-acid chain; its full sequence is Serine--tRNA ligase (426 aa).

235 to 237 (TAE) is a binding site for L-serine. ATP-binding positions include 266–268 (RRE) and Val282. Glu289 is an L-serine binding site. Residue 353–356 (EASS) participates in ATP binding. Residue Ser389 coordinates L-serine.

It belongs to the class-II aminoacyl-tRNA synthetase family. Type-1 seryl-tRNA synthetase subfamily. In terms of assembly, homodimer. The tRNA molecule binds across the dimer.

The protein resides in the cytoplasm. The catalysed reaction is tRNA(Ser) + L-serine + ATP = L-seryl-tRNA(Ser) + AMP + diphosphate + H(+). The enzyme catalyses tRNA(Sec) + L-serine + ATP = L-seryl-tRNA(Sec) + AMP + diphosphate + H(+). It functions in the pathway aminoacyl-tRNA biosynthesis; selenocysteinyl-tRNA(Sec) biosynthesis; L-seryl-tRNA(Sec) from L-serine and tRNA(Sec): step 1/1. In terms of biological role, catalyzes the attachment of serine to tRNA(Ser). Is also able to aminoacylate tRNA(Sec) with serine, to form the misacylated tRNA L-seryl-tRNA(Sec), which will be further converted into selenocysteinyl-tRNA(Sec). The polypeptide is Serine--tRNA ligase (Chlorobium chlorochromatii (strain CaD3)).